The chain runs to 122 residues: Elsinochromes biosynthesis cluster protein HP4 (122 aa).

Functionally, part of the gene cluster that mediates the biosynthesis of elsinochromes, pigments consisting of at least four interconvertible tautomers (A, B, C and D) that have a core phenolic quinone to which various side chains are attached and which play an important role in fungal pathogenesis. The non-reducing polyketide synthase PKS1 was proposed to iteratively catalyze decarboxylation between acetyl-CoA and malonyl-CoA subunits for polyketide chain elongation. The released polyketide undergoes cyclization to form an aromatic ring, and proceeds via serial modification steps to produce the heptaketide back- bone of elsinochrome. As elsinochrome has a symmetrical structure, two identical heptaketides are fused to form a core 1,2-dihydrobenzo-perylene ring structure, which can then be successively modified to produce the various derivatives of elsinochrome. Some of these reactions may be cooperatively carried out, at least in part, by the products of RDT1, OXR1 and PKS1. PRF1, embedded within the elsinochrome cluster possibly functions to stabilize some of the biosynthetic enzymes required for elsinochrome production. As prefoldin is a hexamer containing 2 a and 4 b subunits, additional prefoldin subunits, whose coding genes may not immediately link to the elsinochrome biosynthetic gene cluster, are required to fulfill the chaperone function. In addition, no methyltransferase-coding gene exists within the biosynthetic gene cluster, even though elsinochrome has four methyl groups at positions C3, C7, C8 and C12. Apparently, the identified gene cluster does not contain the entire entourage of genes responsible for elsinochrome biosynthesis. Once elsinochrome is synthesized, it must be exported outside the fungal cells, which is probably accomplished by the ECT1 transporter, to avoid toxicity. This Elsinoe fawcettii (Citrus scab fungus) protein is Elsinochromes biosynthesis cluster protein HP4.